Reading from the N-terminus, the 91-residue chain is uncharacterized protein (91 aa).

Positions M1–I91 constitute an Integrase catalytic domain.

This is an uncharacterized protein from Haemophilus influenzae (strain ATCC 51907 / DSM 11121 / KW20 / Rd).